The chain runs to 302 residues: Lipoyl synthase (302 aa).

[4Fe-4S] cluster-binding residues include Cys44, Cys49, Cys55, Cys70, Cys74, Cys77, and Ser283. In terms of domain architecture, Radical SAM core spans 56–272 (WSKKHATVMI…AKVARSKGFL (217 aa)).

The protein belongs to the radical SAM superfamily. Lipoyl synthase family. [4Fe-4S] cluster is required as a cofactor.

The protein resides in the cytoplasm. The enzyme catalyses [[Fe-S] cluster scaffold protein carrying a second [4Fe-4S](2+) cluster] + N(6)-octanoyl-L-lysyl-[protein] + 2 oxidized [2Fe-2S]-[ferredoxin] + 2 S-adenosyl-L-methionine + 4 H(+) = [[Fe-S] cluster scaffold protein] + N(6)-[(R)-dihydrolipoyl]-L-lysyl-[protein] + 4 Fe(3+) + 2 hydrogen sulfide + 2 5'-deoxyadenosine + 2 L-methionine + 2 reduced [2Fe-2S]-[ferredoxin]. The protein operates within protein modification; protein lipoylation via endogenous pathway; protein N(6)-(lipoyl)lysine from octanoyl-[acyl-carrier-protein]: step 2/2. Catalyzes the radical-mediated insertion of two sulfur atoms into the C-6 and C-8 positions of the octanoyl moiety bound to the lipoyl domains of lipoate-dependent enzymes, thereby converting the octanoylated domains into lipoylated derivatives. In Orientia tsutsugamushi (strain Boryong) (Rickettsia tsutsugamushi), this protein is Lipoyl synthase.